Here is a 428-residue protein sequence, read N- to C-terminus: Light-independent protochlorophyllide reductase subunit N (428 aa).

Cys30, Cys55, and Cys116 together coordinate [4Fe-4S] cluster.

Belongs to the BchN/ChlN family. Protochlorophyllide reductase is composed of three subunits; BchL, BchN and BchB. Forms a heterotetramer of two BchB and two BchN subunits. [4Fe-4S] cluster is required as a cofactor.

It carries out the reaction chlorophyllide a + oxidized 2[4Fe-4S]-[ferredoxin] + 2 ADP + 2 phosphate = protochlorophyllide a + reduced 2[4Fe-4S]-[ferredoxin] + 2 ATP + 2 H2O. Its pathway is porphyrin-containing compound metabolism; bacteriochlorophyll biosynthesis (light-independent). Component of the dark-operative protochlorophyllide reductase (DPOR) that uses Mg-ATP and reduced ferredoxin to reduce ring D of protochlorophyllide (Pchlide) to form chlorophyllide a (Chlide). This reaction is light-independent. The NB-protein (BchN-BchB) is the catalytic component of the complex. This Bradyrhizobium sp. (strain BTAi1 / ATCC BAA-1182) protein is Light-independent protochlorophyllide reductase subunit N.